The sequence spans 165 residues: GTPase activating protein 1 (165 aa).

The region spanning 1–105 (MLGHLVGLVK…VVKMKIEGVA (105 aa)) is the C2 domain. Ca(2+)-binding residues include Arg22, Asp23, Asp28, Asp74, Lys75, Asp76, and Asp81.

The protein belongs to the plant CAR protein family. Binds to PYR/PYL/RCAR abscisic acid intracellular receptors in an ABA-independent manner, both at the plasma membrane and in the nucleus. Binds phospholipids in a Ca(2+)-dependent manner. Interacts with YchF1.

It localises to the cell membrane. It is found in the nucleus. Its subcellular location is the cytoplasm. The protein resides in the cytosol. In terms of biological role, mediates the transient calcium-dependent interaction of PYR/PYL/RCAR abscisic acid (ABA) receptors with the plasma membrane and thus regulates ABA sensitivity. Stimulates the GTPase/ATPase activities of YchF1, and regulates its subcellular localization. Promotes tolerance towards salinity stress by limiting the accumulation of reactive oxygen species (ROS). Promotes resistance to bacterial pathogens. The polypeptide is GTPase activating protein 1 (Oryza sativa subsp. indica (Rice)).